The primary structure comprises 106 residues: 3-phenylpropionate/cinnamic acid dioxygenase ferredoxin subunit (106 aa).

A Rieske domain is found at Ile4 to Ile99. Residues Cys42, His44, Cys62, and His65 each coordinate [2Fe-2S] cluster.

It belongs to the bacterial ring-hydroxylating dioxygenase ferredoxin component family. This dioxygenase system consists of four proteins: the two subunits of the hydroxylase component (HcaE and HcaF), a ferredoxin (HcaC) and a ferredoxin reductase (HcaD). [2Fe-2S] cluster is required as a cofactor.

It functions in the pathway aromatic compound metabolism; 3-phenylpropanoate degradation. Functionally, part of the multicomponent 3-phenylpropionate dioxygenase, that converts 3-phenylpropionic acid (PP) and cinnamic acid (CI) into 3-phenylpropionate-dihydrodiol (PP-dihydrodiol) and cinnamic acid-dihydrodiol (CI-dihydrodiol), respectively. This protein seems to be a 2Fe-2S ferredoxin. This Escherichia coli O139:H28 (strain E24377A / ETEC) protein is 3-phenylpropionate/cinnamic acid dioxygenase ferredoxin subunit.